A 320-amino-acid polypeptide reads, in one-letter code: Transcription factor bHLH96 (320 aa).

The tract at residues 30-121 is disordered; the sequence is EEEDQDPQDT…RSSKNKEEIE (92 aa). Residues 65–76 show a composition bias toward acidic residues; the sequence is YSDDYNYNEEDL. The segment covering 104–114 has biased composition (basic residues); sequence GRRKRRRTRSS. The bHLH domain maps to 122–173; sequence NQRMTHIAVERNRRKQMNEYLAVLRSLMPPYYAQRGDQASIVGGAINYLKEL. The disordered stretch occupies residues 184-206; the sequence is VKTATEDTGAGHDQTKTTSASSS. In terms of domain architecture, ACT spans 244-320; it reads SLKILAKKRP…RRIEEESSFS (77 aa).

As to quaternary structure, homodimer. As to expression, expressed constitutively in roots, leaves, stems, and flowers.

The protein resides in the nucleus. The sequence is that of Transcription factor bHLH96 (BHLH96) from Arabidopsis thaliana (Mouse-ear cress).